The primary structure comprises 427 residues: 3-phosphoshikimate 1-carboxyvinyltransferase (427 aa).

K22, S23, and R27 together coordinate 3-phosphoshikimate. A phosphoenolpyruvate-binding site is contributed by K22. Phosphoenolpyruvate-binding residues include G96 and R124. Residues S169, S170, Q171, S197, D313, N336, and K340 each coordinate 3-phosphoshikimate. Q171 contributes to the phosphoenolpyruvate binding site. The active-site Proton acceptor is the D313. Phosphoenolpyruvate-binding residues include R344, R386, and K411.

The protein belongs to the EPSP synthase family. In terms of assembly, monomer.

Its subcellular location is the cytoplasm. It carries out the reaction 3-phosphoshikimate + phosphoenolpyruvate = 5-O-(1-carboxyvinyl)-3-phosphoshikimate + phosphate. Its pathway is metabolic intermediate biosynthesis; chorismate biosynthesis; chorismate from D-erythrose 4-phosphate and phosphoenolpyruvate: step 6/7. Catalyzes the transfer of the enolpyruvyl moiety of phosphoenolpyruvate (PEP) to the 5-hydroxyl of shikimate-3-phosphate (S3P) to produce enolpyruvyl shikimate-3-phosphate and inorganic phosphate. This Salmonella dublin (strain CT_02021853) protein is 3-phosphoshikimate 1-carboxyvinyltransferase.